The chain runs to 556 residues: Sesquiterpene synthase 2 (556 aa).

D309, D313, D453, and E461 together coordinate Mg(2+). The DDXXD motif signature appears at 309 to 313; sequence DDIYD.

Belongs to the terpene synthase family. Tpsa subfamily. Mg(2+) is required as a cofactor. It depends on Mn(2+) as a cofactor. As to expression, mostly expressed in roots and mature leaflets and, to a lower extent, in rachis and developing leaflets.

The catalysed reaction is (2E,6E)-farnesyl diphosphate = alpha-humulene + diphosphate. It catalyses the reaction (2E,6E)-farnesyl diphosphate = alpha-selinene + diphosphate. The enzyme catalyses (2E,6E)-farnesyl diphosphate = delta-cadinene + diphosphate. It carries out the reaction (2E,6E)-farnesyl diphosphate = (1S,2S,4R)-beta-elemene + diphosphate. Its pathway is secondary metabolite biosynthesis; terpenoid biosynthesis. Its function is as follows. Sesquiterpene synthase involved in the biosynthesis of volatile compounds known for their medicinal efficacy for treating enteritis, dysentery, itch and some cancers. Mediates the conversion of (2E,6E)-farnesyl diphosphate (FPP) into beta-elemene, alpha-humulene, delta-cadinene and alpha-selinene. In Toona sinensis (Chinese mahogany), this protein is Sesquiterpene synthase 2.